A 413-amino-acid polypeptide reads, in one-letter code: MSVVEQAQRARTAAAELAVATRSVKDAALHAMADALVARTPEILAANGADLAAGREGGLNAAVLDRLALDTGRVAGIADALRQMAALPDPIGEVVRGSTLPNGLELRQVRVPFGVVGIVYEARPNVTVDAAGICLKSGNAVLLRGSSSAAQSNAALVAVLRDAVAGAGLPADSVQLLDATTRDSVKELMRARGLVDVLIPRGGAALIRTVVEESTVPVIETGVGNCHVYVDAAADVSKAVAIALNAKTQRLSTCNTAESLLVHAAVADAFLPPALAALAAAGVTVHGCPEVARYSAAVLPATDEDYATEYLSADISVAVVDSLDAAVAHIRRYGTGHTEAIVTDSQPAAREFVARVDAAAVMVNASTRFTDGGEFGFGAEIGISTQKLHARGPMGLPELTSTKYVVTGDGQLR.

It belongs to the gamma-glutamyl phosphate reductase family.

It is found in the cytoplasm. The enzyme catalyses L-glutamate 5-semialdehyde + phosphate + NADP(+) = L-glutamyl 5-phosphate + NADPH + H(+). Its pathway is amino-acid biosynthesis; L-proline biosynthesis; L-glutamate 5-semialdehyde from L-glutamate: step 2/2. Functionally, catalyzes the NADPH-dependent reduction of L-glutamate 5-phosphate into L-glutamate 5-semialdehyde and phosphate. The product spontaneously undergoes cyclization to form 1-pyrroline-5-carboxylate. The sequence is that of Gamma-glutamyl phosphate reductase from Salinispora arenicola (strain CNS-205).